Reading from the N-terminus, the 671-residue chain is DNA polymerase kappa (671 aa).

The 181-residue stretch at 105–285 (WLHVDMDAFY…LPVRKIGGIG (181 aa)) folds into the UmuC domain. Mg(2+) is bound by residues aspartate 109 and aspartate 200. Glutamate 201 is a catalytic residue. Residues 576-613 (YWIDGYKCVLCGIELPPSFVEERQEHSDFHLAQRLQNE) form a UBZ3-type zinc finger. Zn(2+) contacts are provided by cysteine 583, cysteine 586, histidine 601, and histidine 605. Residues 607–671 (AQRLQNEETG…NQNSNETQRK (65 aa)) are disordered. Residues 625–632 (KRRILGKE) carry the Nuclear localization signal motif. Residues 629–650 (LGKEKVNSKPKKQKPDQKDSSK) show a composition bias toward basic and acidic residues. Residues 659–671 (TKSNQNSNETQRK) show a composition bias toward polar residues.

This sequence belongs to the DNA polymerase type-Y family. The cofactor is Mg(2+). In terms of tissue distribution, expressed in roots, leaves, stems, flowers and siliques. Present in endoreduplicating cells.

It localises to the nucleus. It carries out the reaction DNA(n) + a 2'-deoxyribonucleoside 5'-triphosphate = DNA(n+1) + diphosphate. Its activity is regulated as follows. Unable to bypass a single 1,N(6)-ethenoadenine (epsilon-dA) or an abasic site lesions in DNA templates. Functionally, template-directed low-fidelity DNA polymerase specifically involved in DNA repair. Able to extend primer-terminal mispairs, and to insert nucleotides opposite to a single 7,8-dihydro-8-oxoGuanine (8-oxoG) lesion and moderately extend from the resulting primer end, thus leading to both error-free and error-prone bypass of 8-oxoG DNA lesions. Probably involved in consecutive DNA replication cycles in the absence of mitosis. Binds preferentially template-primer DNA substrates or single-stranded DNA. Plays an important role in translesion synthesis, where the normal high-fidelity DNA polymerases cannot proceed and DNA synthesis stalls. Depending on the context, it inserts the correct base, but causes frequent base transitions, transversions and frameshifts. The sequence is that of DNA polymerase kappa from Arabidopsis thaliana (Mouse-ear cress).